The chain runs to 346 residues: Rhomboid protein 1, mitochondrial (346 aa).

Residues 1–73 (MSGVSSVMLG…RFFSQTSILK (73 aa)) constitute a mitochondrion transit peptide. 6 consecutive transmembrane segments (helical) span residues 109 to 129 (SMTILGLSLMAGIYFGSPYLF), 145 to 165 (LVYALLGINVAVFGLWQLPKC), 203 to 223 (MLALWSFGTSLATMLGASNFF), 246 to 266 (LAIVGPSLGASGALFGVLGCF), 275 to 295 (ILLFVFPVPGGAWVAFLASVA), and 308 to 328 (FDYAAHLGGSMMGVLYGWYIS). The active-site Nucleophile is the Ser256. Residue His313 is part of the active site.

Belongs to the peptidase S54 family.

The protein localises to the mitochondrion inner membrane. It carries out the reaction Cleaves type-1 transmembrane domains using a catalytic dyad composed of serine and histidine that are contributed by different transmembrane domains.. Mitochondrial rhomboid serine protease processing the mitochondrial membrane fusion regulator MGM1, and the cytochrome c peroxidase (CCP1). Required for TIM11 stability, ATP synthase complex assembly, mitochondrial morphology, cytochrome c (CYC1) storage and mitochondrial genome maintenance. This is Rhomboid protein 1, mitochondrial (PCP1) from Saccharomyces cerevisiae (strain ATCC 204508 / S288c) (Baker's yeast).